The sequence spans 648 residues: Transketolase (648 aa).

His22 contributes to the substrate binding site. Thiamine diphosphate is bound by residues His62 and 109 to 111 (GPL). Residue Asp150 coordinates Mg(2+). Thiamine diphosphate is bound by residues Gly151 and Asn180. The Mg(2+) site is built by Asn180 and Val182. 3 residues coordinate substrate: His252, Arg345, and Ser372. His252 lines the thiamine diphosphate pocket. Glu397 serves as the catalytic Proton donor. Phe423 provides a ligand contact to thiamine diphosphate. Substrate is bound by residues His447, Asp455, and Arg506.

Belongs to the transketolase family. Homodimer. It depends on Mg(2+) as a cofactor. Requires Ca(2+) as cofactor. Mn(2+) is required as a cofactor. Co(2+) serves as cofactor. The cofactor is thiamine diphosphate.

The catalysed reaction is D-sedoheptulose 7-phosphate + D-glyceraldehyde 3-phosphate = aldehydo-D-ribose 5-phosphate + D-xylulose 5-phosphate. Functionally, catalyzes the transfer of a two-carbon ketol group from a ketose donor to an aldose acceptor, via a covalent intermediate with the cofactor thiamine pyrophosphate. This Mycoplasma pneumoniae (strain ATCC 29342 / M129 / Subtype 1) (Mycoplasmoides pneumoniae) protein is Transketolase (tkt).